The following is a 227-amino-acid chain: Ribosomal RNA large subunit methyltransferase E (227 aa).

Gly78, Trp80, Asp103, Asp119, and Asp143 together coordinate S-adenosyl-L-methionine. The active-site Proton acceptor is the Lys183.

This sequence belongs to the class I-like SAM-binding methyltransferase superfamily. RNA methyltransferase RlmE family.

The protein localises to the cytoplasm. It carries out the reaction uridine(2552) in 23S rRNA + S-adenosyl-L-methionine = 2'-O-methyluridine(2552) in 23S rRNA + S-adenosyl-L-homocysteine + H(+). Functionally, specifically methylates the uridine in position 2552 of 23S rRNA at the 2'-O position of the ribose in the fully assembled 50S ribosomal subunit. This chain is Ribosomal RNA large subunit methyltransferase E, found in Rickettsia peacockii (strain Rustic).